A 1531-amino-acid polypeptide reads, in one-letter code: Lysophospholipase nte1 (1531 aa).

At 1–72 the chain is on the cytoplasmic side; the sequence is MATGDGIIAA…TPPAPSTMVG (72 aa). A helical transmembrane segment spans residues 73-93; the sequence is WIGWIFSFIFQVIPSVLYWIV. Over 94-115 the chain is Lumenal; the sequence is TFTTITLPTWLFTLFSMSLTFT. A helical membrane pass occupies residues 116-136; that stretch reads MNFTTLLLIALAVVSTISWFI. Residues 137–1531 are Cytoplasmic-facing; the sequence is RYRFLNMYSR…RTLAPRRASI (1395 aa). Disordered regions lie at residues 242–265, 303–385, and 766–789; these read GSDE…PDGR, ASSA…TRRK, and NTSS…KQSR. Over residues 325–343 the composition is skewed to basic and acidic residues; that stretch reads REMDDSPHVYQGDRLDPAS. Residues 689–809 and 849–969 each bind a nucleoside 3',5'-cyclic phosphate; these read GGTS…AVAS and RLTS…IAQR. Residues 768 to 779 are compositionally biased toward low complexity; that stretch reads SSSRVSGSAAAA. Residues 1228-1392 form the PNPLA domain; the sequence is LVLGGGGARG…IDNLTVDHMK (165 aa). The short motif at 1232 to 1237 is the GXGXXG element; the sequence is GGGARG. A GXSXG motif is present at residues 1259–1263; that stretch reads GTSIG. Serine 1261 serves as the catalytic Nucleophile. Aspartate 1379 (proton acceptor) is an active-site residue. Positions 1379–1381 match the DGA/G motif; sequence DGG. The tract at residues 1510-1531 is disordered; it reads LPEETEEKKKLQRTLAPRRASI.

Belongs to the NTE family.

The protein localises to the endoplasmic reticulum membrane. The catalysed reaction is a 1-acyl-sn-glycero-3-phosphocholine + H2O = sn-glycerol 3-phosphocholine + a fatty acid + H(+). With respect to regulation, inhibited by organophosphorus esters. Its function is as follows. Intracellular phospholipase B that catalyzes the double deacylation of phosphatidylcholine (PC) to glycerophosphocholine (GroPCho). Plays an important role in membrane lipid homeostasis. Responsible for the rapid PC turnover in response to inositol, elevated temperatures, or when choline is present in the growth medium. This Aspergillus niger (strain ATCC MYA-4892 / CBS 513.88 / FGSC A1513) protein is Lysophospholipase nte1 (nte1).